The following is a 227-amino-acid chain: Leucyl/phenylalanyl-tRNA--protein transferase (227 aa).

This sequence belongs to the L/F-transferase family.

The protein resides in the cytoplasm. It carries out the reaction N-terminal L-lysyl-[protein] + L-leucyl-tRNA(Leu) = N-terminal L-leucyl-L-lysyl-[protein] + tRNA(Leu) + H(+). The enzyme catalyses N-terminal L-arginyl-[protein] + L-leucyl-tRNA(Leu) = N-terminal L-leucyl-L-arginyl-[protein] + tRNA(Leu) + H(+). The catalysed reaction is L-phenylalanyl-tRNA(Phe) + an N-terminal L-alpha-aminoacyl-[protein] = an N-terminal L-phenylalanyl-L-alpha-aminoacyl-[protein] + tRNA(Phe). Functions in the N-end rule pathway of protein degradation where it conjugates Leu, Phe and, less efficiently, Met from aminoacyl-tRNAs to the N-termini of proteins containing an N-terminal arginine or lysine. The sequence is that of Leucyl/phenylalanyl-tRNA--protein transferase from Desulfotalea psychrophila (strain LSv54 / DSM 12343).